A 389-amino-acid chain; its full sequence is Probable nitrate transporter NarT (389 aa).

The next 12 membrane-spanning stretches (helical) occupy residues 14 to 34, 45 to 65, 69 to 89, 97 to 117, 139 to 159, 161 to 181, 211 to 231, 246 to 266, 268 to 288, 294 to 314, 331 to 351, and 353 to 373; these read TLSL…MPFI, ISII…PFGY, IVGA…PIFF, GMLM…SVGV, GNIG…IIGW, TTVR…FIFG, WYFI…NYLV, GVFI…GDKF, AVKV…ILGI, LFTV…GLIF, IVSM…TYVA, and LTGS…IALF.

It belongs to the major facilitator superfamily. Nitrate/nitrite porter (TC 2.A.1.8) family.

The protein localises to the cell membrane. In terms of biological role, probably required for nitrate uptake under anoxic conditions. Also possibly involved in excretion of nitrite produced by the dissimilatory reduction of nitrate. This Staphylococcus aureus (strain JH9) protein is Probable nitrate transporter NarT (narT).